A 592-amino-acid chain; its full sequence is Proteasome-associated ATPase (592 aa).

Residues 1–11 (MTGYDSSEEAE) are compositionally biased toward acidic residues. The interval 1-24 (MTGYDSSEEAERDSSPADGYRQTP) is disordered. The stretch at 25–99 (AQLSAQIRVL…LKEEVDRLAQ (75 aa)) forms a coiled coil. 281-286 (GCGKTL) contacts ATP. Residues 591 to 592 (YL) form a docks into pockets in the proteasome alpha-ring region.

It belongs to the AAA ATPase family. Homohexamer. Assembles into a hexameric ring structure that caps the 20S proteasome core. Strongly interacts with the prokaryotic ubiquitin-like protein Pup through a hydrophobic interface; the interacting region of ARC lies in its N-terminal coiled-coil domain. There is one Pup binding site per ARC hexamer ring. Upon ATP-binding, the C-terminus of ARC interacts with the alpha-rings of the proteasome core, possibly by binding to the intersubunit pockets.

It participates in protein degradation; proteasomal Pup-dependent pathway. Its function is as follows. ATPase which is responsible for recognizing, binding, unfolding and translocation of pupylated proteins into the bacterial 20S proteasome core particle. May be essential for opening the gate of the 20S proteasome via an interaction with its C-terminus, thereby allowing substrate entry and access to the site of proteolysis. Thus, the C-termini of the proteasomal ATPase may function like a 'key in a lock' to induce gate opening and therefore regulate proteolysis. This Nakamurella multipartita (strain ATCC 700099 / DSM 44233 / CIP 104796 / JCM 9543 / NBRC 105858 / Y-104) (Microsphaera multipartita) protein is Proteasome-associated ATPase.